We begin with the raw amino-acid sequence, 326 residues long: DNA-directed RNA polymerase subunit alpha (326 aa).

Residues 1–231 (MQSNALLKPR…DQLSVFADLE (231 aa)) are alpha N-terminal domain (alpha-NTD). The interval 245–326 (IDPVLLRPVD…WPPAGLEKLG (82 aa)) is alpha C-terminal domain (alpha-CTD).

It belongs to the RNA polymerase alpha chain family. As to quaternary structure, homodimer. The RNAP catalytic core consists of 2 alpha, 1 beta, 1 beta' and 1 omega subunit. When a sigma factor is associated with the core the holoenzyme is formed, which can initiate transcription.

The catalysed reaction is RNA(n) + a ribonucleoside 5'-triphosphate = RNA(n+1) + diphosphate. Its function is as follows. DNA-dependent RNA polymerase catalyzes the transcription of DNA into RNA using the four ribonucleoside triphosphates as substrates. This chain is DNA-directed RNA polymerase subunit alpha, found in Azoarcus sp. (strain BH72).